Consider the following 530-residue polypeptide: UDP-glucuronosyltransferase 1A7 (530 aa).

Residues 1–25 (MARAGWTGLLPLYVCLLLTCGFAKA) form the signal peptide. N-linked (GlcNAc...) asparagine glycans are attached at residues Asn71, Asn292, and Asn344. A helical transmembrane segment spans residues 488 to 504 (VIGFLLAVVLTVAFITF).

The protein belongs to the UDP-glycosyltransferase family. Homodimer. Homooligomer. Interacts with UGT1A1, UGT1A3, UGT1A4, UGT1A6, UGT1A8, UGT1A9 and UGT1A10 to form heterodimers. Isoform 1 interacts with isoform 2/i2 suggesting that oligomerization is involved in negative regulation of transferase activity by isoform 2. Isoform 1 also interacts with respective i2 isoforms of UGT1A1, UGT1A3, UGT1A4, UGT1A6, UGT1A8, UGT1A9 and UGT1A10. As to expression, liver and gastric tissue. Isoform 1 and isoform 2 are expressed in esophagus. Neither isoform is expressed in liver, kidney, colon and small intestine.

The protein localises to the endoplasmic reticulum membrane. The catalysed reaction is glucuronate acceptor + UDP-alpha-D-glucuronate = acceptor beta-D-glucuronoside + UDP + H(+). The enzyme catalyses 17alpha-estradiol + UDP-alpha-D-glucuronate = 17alpha-estradiol 3-O-(beta-D-glucuronate) + UDP + H(+). It catalyses the reaction prunetin + UDP-alpha-D-glucuronate = prunetin-5-O-beta-D-glucuronide + UDP. It carries out the reaction 5-epi-5-F2t-IsoP + UDP-alpha-D-glucuronate = 5-epi-5-F2t-IsoP-glucuronide + UDP + H(+). The catalysed reaction is (E)-ferulate + UDP-alpha-D-glucuronate = (E)-ferulic acid beta-D-glucuronate ester + UDP. The enzyme catalyses candesartan + UDP-alpha-D-glucuronate = candesartan O-beta-D-glucuronoside + UDP. It catalyses the reaction SN-38 + UDP-alpha-D-glucuronate = SN-38 O-beta-D-glucuronide + UDP + H(+). It carries out the reaction mycophenolate + UDP-alpha-D-glucuronate = mycophenolate 7-O-beta-D-glucuronide + UDP + H(+). In terms of biological role, UDP-glucuronosyltransferase (UGT) that catalyzes phase II biotransformation reactions in which lipophilic substrates are conjugated with glucuronic acid to increase the metabolite's water solubility, thereby facilitating excretion into either the urine or bile. Essential for the elimination and detoxification of drugs, xenobiotics and endogenous compounds. Catalyzes the glucuronidation of endogenous estrogen hormone epiestradiol. Involved in the glucuronidation of F2-isoprostane (5-epi-5-F2t-IsoP). Involved in the glucuronidation of the phytochemical ferulic acid at the carboxylic acid group. Also catalyzes the glucuronidation of the isoflavones genistein, daidzein, glycitein, formononetin, biochanin A and prunetin, which are phytoestrogens with anticancer and cardiovascular properties. Involved in the glucuronidation of the AGTR1 angiotensin receptor antagonist caderastan, a drug which can inhibit the effect of angiotensin II. Involved in the biotransformation of 7-ethyl-10-hydroxycamptothecin (SN-38), the pharmacologically active metabolite of the anticancer drug irinotecan. Also metabolizes mycophenolate, an immunosuppressive agent. Lacks UGT glucuronidation activity but acts as a negative regulator of isoform 1. The protein is UDP-glucuronosyltransferase 1A7 of Homo sapiens (Human).